The chain runs to 270 residues: Glucosamine-6-phosphate deaminase (270 aa).

Catalysis depends on aspartate 72, which acts as the Proton acceptor; for enolization step. The active-site For ring-opening step is aspartate 141. Histidine 143 (proton acceptor; for ring-opening step) is an active-site residue. The For ring-opening step role is filled by glutamate 148.

The protein belongs to the glucosamine/galactosamine-6-phosphate isomerase family. NagB subfamily.

The enzyme catalyses alpha-D-glucosamine 6-phosphate + H2O = beta-D-fructose 6-phosphate + NH4(+). It functions in the pathway amino-sugar metabolism; N-acetylneuraminate degradation; D-fructose 6-phosphate from N-acetylneuraminate: step 5/5. With respect to regulation, allosterically activated by N-acetylglucosamine 6-phosphate (GlcNAc6P). Functionally, catalyzes the reversible isomerization-deamination of glucosamine 6-phosphate (GlcN6P) to form fructose 6-phosphate (Fru6P) and ammonium ion. The polypeptide is Glucosamine-6-phosphate deaminase (Parabacteroides distasonis (strain ATCC 8503 / DSM 20701 / CIP 104284 / JCM 5825 / NCTC 11152)).